Reading from the N-terminus, the 158-residue chain is MTSPNILLTRIDNRLVHGQVGVTWTSTIGANLLVVVDDVVANDDIQQKLMGITAETYGFGIRFFTIEKTINVIGKAAPHQKIFLICRTPQTVRKLVEGGIDLKDVNVGNMHFSEGKKQISSKVYVDDQDLTDLRFIKQRGVNVFIQDVPGDQKEQIPD.

Positions 1–158 constitute a PTS EIIB type-4 domain; the sequence is MTSPNILLTR…PGDQKEQIPD (158 aa). Residue His-17 is the Pros-phosphohistidine intermediate of the active site.

The protein localises to the cytoplasm. Its function is as follows. The phosphoenolpyruvate-dependent sugar phosphotransferase system (sugar PTS), a major carbohydrate active -transport system, catalyzes the phosphorylation of incoming sugar substrates concomitantly with their translocation across the cell membrane. This system is involved in N-acetylgalactosamine transport. The polypeptide is N-acetylgalactosamine-specific phosphotransferase enzyme IIB component 1 (agaB) (Escherichia coli (strain K12)).